We begin with the raw amino-acid sequence, 146 residues long: Small ribosomal subunit protein eS19 (146 aa).

It belongs to the eukaryotic ribosomal protein eS19 family.

In Oryza sativa subsp. japonica (Rice), this protein is Small ribosomal subunit protein eS19 (RPS19A).